A 216-amino-acid polypeptide reads, in one-letter code: Somatotropin (216 aa).

Residues 1 to 25 (MAPGSWFSPLFITVITLGLQWPQEA) form the signal peptide. His46 provides a ligand contact to Zn(2+). Cys78 and Cys189 are joined by a disulfide. Glu198 provides a ligand contact to Zn(2+). A disulfide bridge links Cys206 with Cys214.

Belongs to the somatotropin/prolactin family.

It is found in the secreted. In terms of biological role, growth hormone plays an important role in growth control. The sequence is that of Somatotropin (GH) from Anas platyrhynchos (Mallard).